The chain runs to 20 residues: MALNLQDKQAIVAEVSEVAK.

The protein belongs to the universal ribosomal protein uL10 family. In terms of assembly, part of the ribosomal stalk of the 50S ribosomal subunit. The N-terminus interacts with L11 and the large rRNA to form the base of the stalk. The C-terminus forms an elongated spine to which L12 dimers bind in a sequential fashion forming a multimeric L10(L12)X complex.

In terms of biological role, forms part of the ribosomal stalk, playing a central role in the interaction of the ribosome with GTP-bound translation factors. The chain is Large ribosomal subunit protein uL10 (rplJ) from Citrobacter freundii.